Here is a 150-residue protein sequence, read N- to C-terminus: Ribonuclease H (150 aa).

The RNase H type-1 domain occupies 1–141; sequence MKSIEVHTDG…VDVLARNQAI (141 aa). Aspartate 9, glutamate 47, aspartate 69, and aspartate 133 together coordinate Mg(2+).

The protein belongs to the RNase H family. In terms of assembly, monomer. Requires Mg(2+) as cofactor.

It localises to the cytoplasm. The enzyme catalyses Endonucleolytic cleavage to 5'-phosphomonoester.. Its function is as follows. Endonuclease that specifically degrades the RNA of RNA-DNA hybrids. The chain is Ribonuclease H from Xanthomonas campestris pv. campestris (strain 8004).